We begin with the raw amino-acid sequence, 558 residues long: Zeta-carotene desaturase, chloroplastic/chromoplastic (558 aa).

Residues 1 to 27 (MASSVVFAATGSLSVPPLKSRRFYVNS) constitute a chloroplast and chromoplast transit peptide.

It belongs to the zeta carotene desaturase family. Requires decylplastoquinone as cofactor. 6-decylubiquinone serves as cofactor. As to expression, highly expressed in leaves. Expressed at low levels in flowers and siliques.

The protein localises to the plastid. It is found in the chloroplast. The protein resides in the chromoplast. The enzyme catalyses 9,9'-di-cis-zeta-carotene + 2 a quinone = 7,7',9,9'-tetra-cis-lycopene + 2 a quinol. Its pathway is carotenoid biosynthesis; lycopene biosynthesis. Plays a crucial role in plant growth and development. Is essential for the biosynthesis of carotenoids. Carotenoids are involved in different physiological processes, including coloration, photoprotection, biosynthesis of abscisic acid (ABA) and chloroplast biogenesis. Catalyzes the conversion of zeta-carotene to lycopene via the intermediary of neurosporene. It carries out two consecutive desaturations (introduction of double bonds) at positions C-7 and C-7'. Shows stereoselectivity toward trans C15-C15'zeta-carotene double bond. The zeta-carotene produced by the phytoene desaturase PDS has a C15-C15' double bond in the cis configuration and it requires isomerization before being recognized as substrate by ZDS. The main product is 7,9,7',9'-tetra-cis-lycopene (pro-lycopene). This chain is Zeta-carotene desaturase, chloroplastic/chromoplastic, found in Arabidopsis thaliana (Mouse-ear cress).